The following is a 304-amino-acid chain: Glycine--tRNA ligase alpha subunit (304 aa).

The protein belongs to the class-II aminoacyl-tRNA synthetase family. Tetramer of two alpha and two beta subunits.

The protein localises to the cytoplasm. The catalysed reaction is tRNA(Gly) + glycine + ATP = glycyl-tRNA(Gly) + AMP + diphosphate. The chain is Glycine--tRNA ligase alpha subunit from Tolumonas auensis (strain DSM 9187 / NBRC 110442 / TA 4).